Reading from the N-terminus, the 531-residue chain is uncharacterized protein (531 aa).

A signal peptide spans 1-22 (MRLQFKLLGFLTLLGTSTILSA). A lipid anchor (N-palmitoyl cysteine) is attached at Cys23. Cys23 is lipidated: S-diacylglycerol cysteine. Residues 31 to 51 (EPNNIEESGPITPTTPTTDVP) are disordered. Residues 40–51 (PITPTTPTTDVP) are compositionally biased toward low complexity.

It belongs to the MG067/MG068/MG395 family.

Its subcellular location is the cell membrane. This is an uncharacterized protein from Mycoplasma pneumoniae (strain ATCC 29342 / M129 / Subtype 1) (Mycoplasmoides pneumoniae).